The following is a 186-amino-acid chain: ADP-ribosylation factor-like protein 8 (186 aa).

An intramembrane region (note=Mediates targeting to membranes) is located at residues 1–19; it reads MLALINRILEWFKSIFWKE. Residues 29–35, 71–75, and 130–133 each bind GTP; these read QFSGKTT, DIGGQ, and NKRD.

This sequence belongs to the small GTPase superfamily. Arf family. As to quaternary structure, interacts with tubulin. Interacts (in GTP-bound form) with Rilpl. Interacts with unc-104. In terms of tissue distribution, expressed throughout development, from embryo to adult stage, in different tissues such as larval motor neurons, salivary glands, testis and ovaries (at protein level).

The protein resides in the lysosome membrane. It localises to the synapse. Its subcellular location is the cell projection. It is found in the axon. The protein localises to the perikaryon. Its function is as follows. Required for normal functioning of the late endocytic pathway including lysosome motility and late endosome-lysosome fusion. Not required for the delivery of lysosomal membrane protein-containing vesicles to late endosomes. In larval motor neurons, mediates the anterograde axonal long-range transport of presynaptic lysosome-related vesicles required for presynaptic biogenesis and synaptic function. Acts downstream of Rab2 during presynaptic precursor vesicle biogenesis. Essential role in chromosome segregation. The polypeptide is ADP-ribosylation factor-like protein 8 (Drosophila melanogaster (Fruit fly)).